Here is a 323-residue protein sequence, read N- to C-terminus: Beta-ketoacyl-[acyl-carrier-protein] synthase III (323 aa).

Catalysis depends on residues cysteine 114 and histidine 250. Residues 251 to 255 (QANLR) are ACP-binding. Asparagine 280 is a catalytic residue.

Belongs to the thiolase-like superfamily. FabH family. In terms of assembly, homodimer.

The protein localises to the cytoplasm. The enzyme catalyses malonyl-[ACP] + acetyl-CoA + H(+) = 3-oxobutanoyl-[ACP] + CO2 + CoA. It participates in lipid metabolism; fatty acid biosynthesis. Functionally, catalyzes the condensation reaction of fatty acid synthesis by the addition to an acyl acceptor of two carbons from malonyl-ACP. Catalyzes the first condensation reaction which initiates fatty acid synthesis and may therefore play a role in governing the total rate of fatty acid production. Possesses both acetoacetyl-ACP synthase and acetyl transacylase activities. Its substrate specificity determines the biosynthesis of branched-chain and/or straight-chain of fatty acids. This Cereibacter sphaeroides (strain ATCC 17029 / ATH 2.4.9) (Rhodobacter sphaeroides) protein is Beta-ketoacyl-[acyl-carrier-protein] synthase III.